Consider the following 732-residue polypeptide: Cyclopenase asqI (732 aa).

H168, H172, and H200 together coordinate Zn(2+).

Belongs to the tyrosinase family. Requires Zn(2+) as cofactor.

The enzyme catalyses (-)-cyclopenine = viridicatin + methyl isocyanate + H(+). It carries out the reaction (-)-4'-methoxycyclopenine = 4'-methoxyviridicatin + methyl isocyanate + H(+). It functions in the pathway secondary metabolite biosynthesis. Its pathway is alkaloid biosynthesis. The protein operates within mycotoxin biosynthesis. Cyclopenase; part of the gene cluster that mediates the biosynthesis of the aspoquinolone mycotoxins. Within the pathway, the cyclopenase asqI catalyzes the conversion of 4'-methoxycyclopenin into 4'-methoxyviridicatin. Cyclopenin can also be converted into viridicatin by asqI. The first step of the pathway is catalyzed by the nonribosomal peptide synthetase asqK that condenses anthranilic acid and O-methyl-L-tyrosine to produce 4'-methoxycyclopeptin. 4'-methoxycyclopeptin is then converted to 4'-methoxydehydrocyclopeptin by the ketoglutarate-dependent dioxygenase asqJ. AsqJ also converts its first product 4'-methoxydehydrocyclopeptin to 4'-methoxycyclopenin. The following conversion of 4'-methoxycyclopenin into 4'-methoxyviridicatin is catalyzed by the cyclopenase asqI. 4'-methoxyviridicatin is the precursor of quinolone natural products, and is further converted to quinolinone B. The prenyltransferase asqH1 then catalyzes the canonical Friedel-Crafts alkylation of quinolinone B with dimethylallyl cation to yield dimethylallyl quinolone, which is subjected to FAD-dependent dehydrogenation by the FAD-linked oxidoreductase asqF to yield conjugated aryl diene. The delta(3') double bond then serves as the site of the second alkylation with DMAPP catalyzed by the prenyltransferase asqH2 to yield a carbenium ion intermediate, which can be attacked by H(2)O to yield a styrenyl quinolone containing a C3'-hydroxyprenyl chain. The FAD-dependent monooxygenase asqG performs epoxidation of the terminal C7'-C8' olefin. Finally, after dehydratation of the epoxide at C3 by asqC, the quinolone epoxide rearrangement protein asqO catalyzes an enzymatic 3-exo-tet cyclization to yield the cyclopropyl-THF ring system in aspoquinolone. The polypeptide is Cyclopenase asqI (Emericella nidulans (strain FGSC A4 / ATCC 38163 / CBS 112.46 / NRRL 194 / M139) (Aspergillus nidulans)).